Consider the following 878-residue polypeptide: Phosphoenolpyruvate carboxylase (878 aa).

Active-site residues include His-138 and Lys-545.

The protein belongs to the PEPCase type 1 family. The cofactor is Mg(2+).

The enzyme catalyses oxaloacetate + phosphate = phosphoenolpyruvate + hydrogencarbonate. In terms of biological role, forms oxaloacetate, a four-carbon dicarboxylic acid source for the tricarboxylic acid cycle. This is Phosphoenolpyruvate carboxylase from Shewanella halifaxensis (strain HAW-EB4).